The chain runs to 868 residues: Paladin (868 aa).

Gly-2 is lipidated: N-myristoyl glycine.

It belongs to the paladin family.

The protein resides in the cytoplasm. It is found in the cytosol. The protein is Paladin (PALD1) of Gallus gallus (Chicken).